The primary structure comprises 1349 residues: Membrane-associated phosphatidylinositol transfer protein 2 (1349 aa).

A disordered region spans residues 262 to 344 (EDGEEATELV…RDSDESSDDE (83 aa)). The span at 302–322 (KQWSTSSKSSRSSKRGASPSR) shows a compositional bias: low complexity. Residues serine 337, serine 341, serine 368, and serine 589 each carry the phosphoserine modification. Residues 618–631 (GGGGGSSGGGGSSG) are compositionally biased toward gly residues. The segment at 618–671 (GGGGGSSGGGGSSGGSSLESSRHLSRSNVDIPRSNGTEDPKRQLPRKRSDSSTY) is disordered. Serine 644 carries the post-translational modification Phosphoserine. Residues 653–667 (GTEDPKRQLPRKRSD) show a composition bias toward basic and acidic residues. Serine 700, serine 701, and serine 702 each carry phosphoserine. Positions 715 to 963 (FDFEITDLFL…VSFLLRQVMR (249 aa)) constitute a DDHD domain. At arginine 828 the chain carries Omega-N-methylarginine. Residues 876–900 (LPAPSPTTPGPHPPARKASPGLERA) are disordered. The segment covering 878-888 (APSPTTPGPHP) has biased composition (pro residues). The residue at position 1277 (serine 1277) is a Phosphoserine. Residues 1296–1326 (TISAQPSGPSHRHERTQSQADGEQRGQRSMS) are disordered.

The protein belongs to the PtdIns transfer protein family. PI transfer class IIA subfamily. Interacts with PTK2B via its C-terminus. Interacts with CPNE4 (via VWFA domain). As to expression, highly expressed in brain, heart, ovary, testis and thymus. Detected in small intestine, prostate, pancreas, skeletal muscle, liver, colon and placenta.

The protein localises to the endomembrane system. Catalyzes the transfer of phosphatidylinositol and phosphatidylcholine between membranes (in vitro). Binds calcium ions. The chain is Membrane-associated phosphatidylinositol transfer protein 2 (PITPNM2) from Homo sapiens (Human).